Here is a 445-residue protein sequence, read N- to C-terminus: Ribosomal protein uS12 methylthiotransferase RimO (445 aa).

One can recognise an MTTase N-terminal domain in the interval 6–121 (KKVAVVTLGC…ILETLEEAEK (116 aa)). The [4Fe-4S] cluster site is built by cysteine 15, cysteine 50, cysteine 84, cysteine 159, cysteine 163, and cysteine 166. One can recognise a Radical SAM core domain in the interval 145 to 375 (LSPKQYAYVK…MELQHDIAYE (231 aa)). One can recognise a TRAM domain in the interval 378–445 (QRWVGQTLKV…SYDLMGEVVQ (68 aa)).

The protein belongs to the methylthiotransferase family. RimO subfamily. [4Fe-4S] cluster is required as a cofactor.

It is found in the cytoplasm. The catalysed reaction is L-aspartate(89)-[ribosomal protein uS12]-hydrogen + (sulfur carrier)-SH + AH2 + 2 S-adenosyl-L-methionine = 3-methylsulfanyl-L-aspartate(89)-[ribosomal protein uS12]-hydrogen + (sulfur carrier)-H + 5'-deoxyadenosine + L-methionine + A + S-adenosyl-L-homocysteine + 2 H(+). Catalyzes the methylthiolation of an aspartic acid residue of ribosomal protein uS12. The polypeptide is Ribosomal protein uS12 methylthiotransferase RimO (Desulfitobacterium hafniense (strain Y51)).